Here is a 154-residue protein sequence, read N- to C-terminus: Large ribosomal subunit protein uL30 (154 aa).

This sequence belongs to the universal ribosomal protein uL30 family. In terms of assembly, part of the 50S ribosomal subunit.

The sequence is that of Large ribosomal subunit protein uL30 from Methanocaldococcus jannaschii (strain ATCC 43067 / DSM 2661 / JAL-1 / JCM 10045 / NBRC 100440) (Methanococcus jannaschii).